A 490-amino-acid polypeptide reads, in one-letter code: Calcium-dependent protein kinase 12 (490 aa).

The 259-residue stretch at 22-280 (YFLGQVLGQG…AHQVLCHPWI (259 aa)) folds into the Protein kinase domain. Residues 28–36 (LGQGQFGTT) and lysine 51 each bind ATP. Aspartate 146 acts as the Proton acceptor in catalysis. Serine 186 is modified (phosphoserine). Residues 286 to 316 (APDKPLDCAVVSRLKKFSAMNKLKKMALRVI) are autoinhibitory domain. EF-hand domains follow at residues 323 to 358 (EEIG…VGSE), 359 to 394 (LMES…LNKL), 395 to 430 (EREE…FGIN), and 434 to 464 (LDEM…GNGT). Residues aspartate 336, aspartate 338, serine 340, threonine 342, glutamate 347, aspartate 372, aspartate 374, serine 376, threonine 378, glutamate 383, aspartate 408, aspartate 410, serine 412, tyrosine 414, glutamate 419, aspartate 442, aspartate 444, aspartate 446, glutamine 448, and glutamate 453 each contribute to the Ca(2+) site.

It belongs to the protein kinase superfamily. Ser/Thr protein kinase family. CDPK subfamily. As to quaternary structure, interacts weakly with DI19. Ubiquitously expressed.

It carries out the reaction L-seryl-[protein] + ATP = O-phospho-L-seryl-[protein] + ADP + H(+). The enzyme catalyses L-threonyl-[protein] + ATP = O-phospho-L-threonyl-[protein] + ADP + H(+). With respect to regulation, activated by calcium. Autophosphorylation may play an important role in the regulation of the kinase activity. May play a role in signal transduction pathways that involve calcium as a second messenger. The chain is Calcium-dependent protein kinase 12 (CPK12) from Arabidopsis thaliana (Mouse-ear cress).